The chain runs to 142 residues: Type IV pilus subunit protein TapA (142 aa).

The propeptide at 1 to 6 is leader sequence; the sequence is MKKQSG. At Phe7 the chain carries N-methylphenylalanine. A helical transmembrane segment spans residues 7-27; it reads FTLIELMIVVAIVAILAAIAL.

This sequence belongs to the N-Me-Phe pilin family.

Its subcellular location is the membrane. Functionally, major component of the type IV (TAP) pilus. Aeromonas hydrophila possesses two distinct families of type IV pili: the bundle-forming pilus (Bfp) and the type IV pilus (Tap). In Aeromonas hydrophila, this protein is Type IV pilus subunit protein TapA (tapA).